The sequence spans 589 residues: Probable galacturonosyltransferase 6 (589 aa).

Over 1-6 (MKQIRR) the chain is Cytoplasmic. The helical; Signal-anchor for type II membrane protein transmembrane segment at 7–27 (WQRILILALLSISVFAPLIFV) threads the bilayer. At 28 to 589 (SNRLKSITPV…TYLQQCNLQA (562 aa)) the chain is on the lumenal side. N-linked (GlcNAc...) asparagine glycans are attached at residues N83 and N126. Positions 127 to 151 (KTDFKPPLSKGEKNTRVQPDRATDV) are disordered. The span at 136-151 (KGEKNTRVQPDRATDV) shows a compositional bias: basic and acidic residues. Residues N317 and N454 are each glycosylated (N-linked (GlcNAc...) asparagine).

Belongs to the glycosyltransferase 8 family. Expressed in roots, inflorescences, siliques, leaves and stems.

It is found in the golgi apparatus membrane. It functions in the pathway glycan metabolism; pectin biosynthesis. Probably involved in pectin biosynthesis in cell walls. In Arabidopsis thaliana (Mouse-ear cress), this protein is Probable galacturonosyltransferase 6 (GAUT6).